Here is a 399-residue protein sequence, read N- to C-terminus: Probable peptidoglycan glycosyltransferase FtsW (399 aa).

The Cytoplasmic portion of the chain corresponds to 1–25; it reads MTAAAPSKPLPRTPRVRQAYPLDYP. A helical membrane pass occupies residues 26 to 46; that stretch reads LLLCALGLLAFGWVMVTSASM. The Periplasmic portion of the chain corresponds to 47 to 64; the sequence is SIAEACCQNPFHYSIRHA. A helical membrane pass occupies residues 65–85; that stretch reads IALGLALMLGLMAYSVPSHWW. Residues 86–88 are Cytoplasmic-facing; that stretch reads ERH. The helical transmembrane segment at 89–109 threads the bilayer; that stretch reads GVWLFLASALVLILVLIPGIG. At 110–117 the chain is on the periplasmic side; it reads RTVNGATR. Residues 118 to 138 form a helical membrane-spanning segment; it reads WIPLGPLNVQPSEFVKLFAIL. Over 139–153 the chain is Cytoplasmic; it reads YVAGYLVRHADKVVN. Residues 154-174 form a helical membrane-spanning segment; that stretch reads QLSGFIRPLILIGAAALLILM. Residues 175 to 177 lie on the Periplasmic side of the membrane; that stretch reads QPD. 2 helical membrane passes run 178–198 and 199–219; these read FGTT…GGAS and LLPF…LVIF. Residues 220–281 lie on the Periplasmic side of the membrane; it reads SPYRLERVVS…PEAHTDFLPS (62 aa). Residues 282-302 form a helical membrane-spanning segment; the sequence is VIGEELGLAGMLVLIAAFVFL. Over 303-326 the chain is Cytoplasmic; the sequence is SWRAMSIGVRAEALKRPFESYVAQ. Residues 327-347 form a helical membrane-spanning segment; that stretch reads GIGLWIGLQSFVNLGVNVGIL. Residues 348–353 lie on the Periplasmic side of the membrane; sequence PTKGLT. A helical transmembrane segment spans residues 354–374; that stretch reads LPFMSYGSNSLMVGCMAVAIL. The Cytoplasmic segment spans residues 375 to 399; the sequence is LRIDVMLRRVESEAKFKRGTPWSRA.

Belongs to the SEDS family. FtsW subfamily.

The protein localises to the cell inner membrane. It carries out the reaction [GlcNAc-(1-&gt;4)-Mur2Ac(oyl-L-Ala-gamma-D-Glu-L-Lys-D-Ala-D-Ala)](n)-di-trans,octa-cis-undecaprenyl diphosphate + beta-D-GlcNAc-(1-&gt;4)-Mur2Ac(oyl-L-Ala-gamma-D-Glu-L-Lys-D-Ala-D-Ala)-di-trans,octa-cis-undecaprenyl diphosphate = [GlcNAc-(1-&gt;4)-Mur2Ac(oyl-L-Ala-gamma-D-Glu-L-Lys-D-Ala-D-Ala)](n+1)-di-trans,octa-cis-undecaprenyl diphosphate + di-trans,octa-cis-undecaprenyl diphosphate + H(+). It functions in the pathway cell wall biogenesis; peptidoglycan biosynthesis. In terms of biological role, peptidoglycan polymerase that is essential for cell division. This chain is Probable peptidoglycan glycosyltransferase FtsW, found in Allochromatium vinosum (strain ATCC 17899 / DSM 180 / NBRC 103801 / NCIMB 10441 / D) (Chromatium vinosum).